Consider the following 294-residue polypeptide: Nucleotide-binding protein CA_C0511 (294 aa).

An ATP-binding site is contributed by 8–15 (GLSGAGKT). Residue 59–62 (DIRG) coordinates GTP.

This sequence belongs to the RapZ-like family.

Displays ATPase and GTPase activities. This chain is Nucleotide-binding protein CA_C0511, found in Clostridium acetobutylicum (strain ATCC 824 / DSM 792 / JCM 1419 / IAM 19013 / LMG 5710 / NBRC 13948 / NRRL B-527 / VKM B-1787 / 2291 / W).